A 185-amino-acid polypeptide reads, in one-letter code: Small ribosomal subunit protein uS4c (185 aa).

One can recognise an S4 RNA-binding domain in the interval 72–134 (MRLDNVIFRL…PTSCNALKGE (63 aa)). The interval 132 to 154 (KGESPGGGETPDHLTASLSEGSR) is disordered.

It belongs to the universal ribosomal protein uS4 family. In terms of assembly, part of the 30S ribosomal subunit. Contacts protein S5. The interaction surface between S4 and S5 is involved in control of translational fidelity.

The protein resides in the plastid. Its subcellular location is the chloroplast. One of the primary rRNA binding proteins, it binds directly to 16S rRNA where it nucleates assembly of the body of the 30S subunit. In terms of biological role, with S5 and S12 plays an important role in translational accuracy. In Woodwardia unigemmata (Chainfern), this protein is Small ribosomal subunit protein uS4c (rps4).